The following is a 453-amino-acid chain: Protein amnionless (453 aa).

An N-terminal signal peptide occupies residues 1–19 (MGVLGRVLLWLQLCALTQA). Over 20–357 (VSKLWVPNTD…ESGAHVWGSS (338 aa)) the chain is Extracellular. N-linked (GlcNAc...) asparagine glycosylation occurs at Asn35. Intrachain disulfides connect Cys43–Cys96, Cys137–Cys213, Cys205–Cys211, Cys223–Cys249, Cys234–Cys250, and Cys239–Cys253. The segment at 67-87 (SDMLLPLDGELVLASGAGFGV) is interaction with CUBN. Residues 202–254 (PEDCADPSGCVCGNAEAQPWICAALLQPLGGRCPQAACHSALRPQGQCCDLCG) enclose the VWFC domain. A helical transmembrane segment spans residues 358 to 378 (AAGLAGGVAAAVLLALLVLLV). Topologically, residues 379–453 (APPLLRRAGR…PLFAGAEAEA (75 aa)) are cytoplasmic.

As to quaternary structure, interacts (via extracellular region) with CUBN/cubilin, giving rise to a huge complex containing one AMN chain and three CUBN chains. In terms of processing, N-glycosylated. Post-translationally, a soluble form arises by proteolytic removal of the membrane anchor. As to expression, detected in proximal tubules in the kidney cortex (at protein level). Long isoforms are highly expressed in small intestine, colon and kidney (renal proximal tubule epithelial cells). Shorter isoforms are detected at lower levels in testis, thymus and peripheral blood leukocytes.

The protein localises to the apical cell membrane. The protein resides in the cell membrane. It is found in the endosome membrane. Its subcellular location is the membrane. It localises to the coated pit. The protein localises to the secreted. Membrane-bound component of the endocytic receptor formed by AMN and CUBN. Required for normal CUBN glycosylation and trafficking to the cell surface. The complex formed by AMN and CUBN is required for efficient absorption of vitamin B12. Required for normal CUBN-mediated protein transport in the kidney. The polypeptide is Protein amnionless (AMN) (Homo sapiens (Human)).